We begin with the raw amino-acid sequence, 271 residues long: Putative hydro-lyase Mrad2831_3350 (271 aa).

The protein belongs to the D-glutamate cyclase family.

In Methylobacterium radiotolerans (strain ATCC 27329 / DSM 1819 / JCM 2831 / NBRC 15690 / NCIMB 10815 / 0-1), this protein is Putative hydro-lyase Mrad2831_3350.